The chain runs to 107 residues: Integration host factor subunit beta (107 aa).

Positions 56-107 (RPARVGRNPKSGEKVQVPEKFVPHFKPGKELRERVDGRAGEPLKADDPDDER) are disordered. Residues 82–101 (PGKELRERVDGRAGEPLKAD) show a composition bias toward basic and acidic residues.

This sequence belongs to the bacterial histone-like protein family. Heterodimer of an alpha and a beta chain.

Functionally, this protein is one of the two subunits of integration host factor, a specific DNA-binding protein that functions in genetic recombination as well as in transcriptional and translational control. In Burkholderia vietnamiensis (strain G4 / LMG 22486) (Burkholderia cepacia (strain R1808)), this protein is Integration host factor subunit beta.